The primary structure comprises 304 residues: Olfactory receptor 8G2 (304 aa).

Over 1–41 (MVFLSSVETDQRKMSAGNHSSVTEFILAGLSEQPELQLRLF) the chain is Extracellular. Residue Asn18 is glycosylated (N-linked (GlcNAc...) asparagine). A helical transmembrane segment spans residues 42–62 (LLFLGIYVVTVVGNLSMITLI). Over 63–69 (GLSSHLH) the chain is Cytoplasmic. Residues 70-90 (TPMYYFLSGLSFIDLCHSTII) form a helical membrane-spanning segment. The Extracellular portion of the chain corresponds to 91-110 (TPKMLVNFVTEKNIISYPEC). An intrachain disulfide couples Cys110 to Cys192. A helical membrane pass occupies residues 111-130 (MTQLYFFLIFAIAECHMLAV). The Cytoplasmic portion of the chain corresponds to 131–154 (TAYDRYVAICSPLLYNVIMSYHHC). A helical membrane pass occupies residues 155-175 (FWLTVGVYVLGILGSTIHTGF). At 176–193 (MLRLFLCKTNVINHYFCD) the chain is on the extracellular side. The chain crosses the membrane as a helical span at residues 194–214 (LFPLLGLSCSSTYINELLVLV). At 215 to 217 (LSA) the chain is on the cytoplasmic side. Residues 218-238 (FNILTPALTILASYIFIIASI) form a helical membrane-spanning segment. The Extracellular portion of the chain corresponds to 239 to 257 (LRIRSTEGRSKAFSTCSSH). A helical membrane pass occupies residues 258-278 (ILAVAVFFGSAAFMYLQPSSV). Residues 279–304 (SSMDQRKVSSVFYTTIVPMLNPQSIA) are Cytoplasmic-facing.

Belongs to the G-protein coupled receptor 1 family.

It is found in the cell membrane. In terms of biological role, odorant receptor. In Homo sapiens (Human), this protein is Olfactory receptor 8G2.